A 130-amino-acid polypeptide reads, in one-letter code: Capsid protein (130 aa).

A viral RNA-binding region spans residues 32 to 105; it reads EWISSNSRSQ…FATNSDCELI (74 aa).

Belongs to the Leviviricetes capsid protein family. In terms of assembly, homodimer. The capsid proteins form dimers that assemble by group of 5. Twelve such pentamers are linked together with free dimers. The homodimers binds to the viral RNA via an operator hairpin, but also to many other RNA sequences in the viral genome; this interaction probably shifts the virus from the replicative to the assembly phase and ensures specific encapsidation of the viral genome.

It is found in the virion. Capsid protein self-assembles to form an icosahedral capsid with a T=3 symmetry, about 26 nm in diameter, and consisting of 89 capsid proteins dimers (178 capsid proteins). Involved in viral genome encapsidation through the interaction between a capsid protein dimer and the multiple packaging signals present in the RNA genome. The capsid also contains 1 copy of the A2 maturation protein. Its function is as follows. Acts as a translational repressor of viral replicase synthesis late in infection. This latter function is the result of capsid protein interaction with an RNA hairpin which contains the replicase ribosome-binding site. In Escherichia coli (Bacteriophage MS2), this protein is Capsid protein.